Reading from the N-terminus, the 180-residue chain is Large ribosomal subunit protein uL6 (180 aa).

The protein belongs to the universal ribosomal protein uL6 family. Part of the 50S ribosomal subunit.

In terms of biological role, this protein binds to the 23S rRNA, and is important in its secondary structure. It is located near the subunit interface in the base of the L7/L12 stalk, and near the tRNA binding site of the peptidyltransferase center. The sequence is that of Large ribosomal subunit protein uL6 from Clostridium kluyveri (strain NBRC 12016).